The chain runs to 191 residues: dTTP/UTP pyrophosphatase (191 aa).

The active-site Proton acceptor is the D70.

It belongs to the Maf family. YhdE subfamily. Requires a divalent metal cation as cofactor.

The protein localises to the cytoplasm. It carries out the reaction dTTP + H2O = dTMP + diphosphate + H(+). It catalyses the reaction UTP + H2O = UMP + diphosphate + H(+). Its function is as follows. Nucleoside triphosphate pyrophosphatase that hydrolyzes dTTP and UTP. May have a dual role in cell division arrest and in preventing the incorporation of modified nucleotides into cellular nucleic acids. In Clostridium novyi (strain NT), this protein is dTTP/UTP pyrophosphatase.